The sequence spans 602 residues: Elongation factor 4 (602 aa).

Residues 7 to 189 (KFIRNFSIIA…QLVVAIPPPV (183 aa)) form the tr-type G domain. GTP-binding positions include 19–24 (DHGKST) and 136–139 (NKID).

Belongs to the TRAFAC class translation factor GTPase superfamily. Classic translation factor GTPase family. LepA subfamily.

The protein localises to the cell inner membrane. The catalysed reaction is GTP + H2O = GDP + phosphate + H(+). Its function is as follows. Required for accurate and efficient protein synthesis under certain stress conditions. May act as a fidelity factor of the translation reaction, by catalyzing a one-codon backward translocation of tRNAs on improperly translocated ribosomes. Back-translocation proceeds from a post-translocation (POST) complex to a pre-translocation (PRE) complex, thus giving elongation factor G a second chance to translocate the tRNAs correctly. Binds to ribosomes in a GTP-dependent manner. This is Elongation factor 4 from Coxiella burnetii (strain RSA 493 / Nine Mile phase I).